A 170-amino-acid polypeptide reads, in one-letter code: Large ribosomal subunit protein uL16 (170 aa).

This sequence belongs to the universal ribosomal protein uL16 family.

This is Large ribosomal subunit protein uL16 from Methanospirillum hungatei JF-1 (strain ATCC 27890 / DSM 864 / NBRC 100397 / JF-1).